Here is a 226-residue protein sequence, read N- to C-terminus: MALSDVDVQKQIKHMMAFIEQEANEKAEEIDAKAEEEFNIEKGRLVQTQRLKIMEYYEKKEKQIEQQKKIQMSTLRNQARLKVLRARNDLISELLNDAKLRLSRIVTDPEFYQGLLDKLVLQGLLRLLEPVVIVRCRPQDHFLVEAAVQRAIPQYTAVSHRCVEVQVDKEVQLATDTTGGVEVYSSDQRIMVSNTLESRLDLLSQQKMPEIRKALFGANANRKFFV.

It belongs to the V-ATPase E subunit family. As to quaternary structure, V-ATPase is a heteromultimeric enzyme made up of two complexes: the ATP-hydrolytic V1 complex and the proton translocation V0 complex. The V1 complex consists of three catalytic AB heterodimers that form a heterohexamer, three peripheral stalks each consisting of EG heterodimers, one central rotor including subunits D and F, and the regulatory subunits C and H. The proton translocation complex V0 consists of the proton transport subunit a, a ring of proteolipid subunits c9c'', rotary subunit d, subunits e and f, and the accessory subunits ATP6AP1/Ac45 and ATP6AP2/PRR.

Functionally, subunit of the V1 complex of vacuolar(H+)-ATPase (V-ATPase), a multisubunit enzyme composed of a peripheral complex (V1) that hydrolyzes ATP and a membrane integral complex (V0) that translocates protons. V-ATPase is responsible for acidifying and maintaining the pH of intracellular compartments and in some cell types, is targeted to the plasma membrane, where it is responsible for acidifying the extracellular environment. This is V-type proton ATPase subunit E 2 (ATP6V1E2) from Bos taurus (Bovine).